We begin with the raw amino-acid sequence, 257 residues long: Thiazole synthase (257 aa).

Residue lysine 97 is the Schiff-base intermediate with DXP of the active site. 1-deoxy-D-xylulose 5-phosphate-binding positions include glycine 158, alanine 184–glycine 185, and asparagine 206–threonine 207.

The protein belongs to the ThiG family. In terms of assembly, homotetramer. Forms heterodimers with either ThiH or ThiS.

The protein localises to the cytoplasm. The enzyme catalyses [ThiS sulfur-carrier protein]-C-terminal-Gly-aminoethanethioate + 2-iminoacetate + 1-deoxy-D-xylulose 5-phosphate = [ThiS sulfur-carrier protein]-C-terminal Gly-Gly + 2-[(2R,5Z)-2-carboxy-4-methylthiazol-5(2H)-ylidene]ethyl phosphate + 2 H2O + H(+). Its pathway is cofactor biosynthesis; thiamine diphosphate biosynthesis. Catalyzes the rearrangement of 1-deoxy-D-xylulose 5-phosphate (DXP) to produce the thiazole phosphate moiety of thiamine. Sulfur is provided by the thiocarboxylate moiety of the carrier protein ThiS. In vitro, sulfur can be provided by H(2)S. In Desulforamulus reducens (strain ATCC BAA-1160 / DSM 100696 / MI-1) (Desulfotomaculum reducens), this protein is Thiazole synthase.